The primary structure comprises 95 residues: Small ribosomal subunit protein bS6 (95 aa).

It belongs to the bacterial ribosomal protein bS6 family. In terms of assembly, part of the 30S ribosomal subunit.

Binds together with bS18 to 16S ribosomal RNA. This is Small ribosomal subunit protein bS6 (rpsF) from Bacillus subtilis (strain 168).